The chain runs to 724 residues: Phosphoribosylformylglycinamidine synthase subunit PurL (724 aa).

His-34 is a catalytic residue. Position 37 (Tyr-37) interacts with ATP. Mg(2+) is bound at residue Glu-78. Residues 79–82 (SHNH) and Arg-101 each bind substrate. The Proton acceptor role is filled by His-80. Asp-102 contacts Mg(2+). A substrate-binding site is contributed by Gln-226. Position 254 (Asp-254) interacts with Mg(2+). 298–300 (ESQ) lines the substrate pocket. ATP is bound by residues Asp-480 and Gly-517. Asn-518 is a binding site for Mg(2+). A substrate-binding site is contributed by Ser-520.

Belongs to the FGAMS family. Monomer. Part of the FGAM synthase complex composed of 1 PurL, 1 PurQ and 2 PurS subunits.

It is found in the cytoplasm. It catalyses the reaction N(2)-formyl-N(1)-(5-phospho-beta-D-ribosyl)glycinamide + L-glutamine + ATP + H2O = 2-formamido-N(1)-(5-O-phospho-beta-D-ribosyl)acetamidine + L-glutamate + ADP + phosphate + H(+). It participates in purine metabolism; IMP biosynthesis via de novo pathway; 5-amino-1-(5-phospho-D-ribosyl)imidazole from N(2)-formyl-N(1)-(5-phospho-D-ribosyl)glycinamide: step 1/2. In terms of biological role, part of the phosphoribosylformylglycinamidine synthase complex involved in the purines biosynthetic pathway. Catalyzes the ATP-dependent conversion of formylglycinamide ribonucleotide (FGAR) and glutamine to yield formylglycinamidine ribonucleotide (FGAM) and glutamate. The FGAM synthase complex is composed of three subunits. PurQ produces an ammonia molecule by converting glutamine to glutamate. PurL transfers the ammonia molecule to FGAR to form FGAM in an ATP-dependent manner. PurS interacts with PurQ and PurL and is thought to assist in the transfer of the ammonia molecule from PurQ to PurL. This chain is Phosphoribosylformylglycinamidine synthase subunit PurL, found in Methanopyrus kandleri (strain AV19 / DSM 6324 / JCM 9639 / NBRC 100938).